The following is a 385-amino-acid chain: Digeranylgeranylglycerophospholipid reductase 2 (385 aa).

Residues alanine 13, glutamate 32, cysteine 43, alanine 44, glycine 46, arginine 95, alanine 119, aspartate 273, glycine 285, and isoleucine 286 each contribute to the FAD site.

This sequence belongs to the geranylgeranyl reductase family. DGGGPL reductase subfamily. FAD is required as a cofactor.

The catalysed reaction is a 2,3-bis-O-phytanyl-sn-glycerol 1-phospholipid + 8 A = a 2,3-bis-O-(geranylgeranyl)-sn-glycerol 1-phospholipid + 8 AH2. The enzyme catalyses 2,3-bis-O-(phytanyl)-sn-glycerol 1-phosphate + 8 A = 2,3-bis-O-(geranylgeranyl)-sn-glycerol 1-phosphate + 8 AH2. It carries out the reaction CDP-2,3-bis-O-(geranylgeranyl)-sn-glycerol + 8 AH2 = CDP-2,3-bis-O-(phytanyl)-sn-glycerol + 8 A. It catalyses the reaction archaetidylserine + 8 AH2 = 2,3-bis-O-phytanyl-sn-glycero-3-phospho-L-serine + 8 A. It participates in membrane lipid metabolism; glycerophospholipid metabolism. Its function is as follows. Is involved in the reduction of 2,3-digeranylgeranylglycerophospholipids (unsaturated archaeols) into 2,3-diphytanylglycerophospholipids (saturated archaeols) in the biosynthesis of archaeal membrane lipids. Catalyzes the formation of archaetidic acid (2,3-di-O-phytanyl-sn-glyceryl phosphate) from 2,3-di-O-geranylgeranylglyceryl phosphate (DGGGP) via the hydrogenation of each double bond of the isoprenoid chains. Is also probably able to reduce double bonds of geranyl groups in CDP-2,3-bis-O-(geranylgeranyl)-sn-glycerol and archaetidylserine, thus acting at various stages in the biosynthesis of archaeal membrane lipids. In Methanothermobacter thermautotrophicus (strain ATCC 29096 / DSM 1053 / JCM 10044 / NBRC 100330 / Delta H) (Methanobacterium thermoautotrophicum), this protein is Digeranylgeranylglycerophospholipid reductase 2.